Reading from the N-terminus, the 286-residue chain is Putative L-ribulose-5-phosphate 3-epimerase SgbU (286 aa).

Belongs to the L-ribulose-5-phosphate 3-epimerase family.

The catalysed reaction is L-ribulose 5-phosphate = L-xylulose 5-phosphate. Its function is as follows. Catalyzes the isomerization of L-xylulose-5-phosphate to L-ribulose-5-phosphate. This chain is Putative L-ribulose-5-phosphate 3-epimerase SgbU (sgbU), found in Haemophilus influenzae (strain ATCC 51907 / DSM 11121 / KW20 / Rd).